The following is a 110-amino-acid chain: Small ribosomal subunit protein bS16 (110 aa).

Positions 81–104 are enriched in basic and acidic residues; that stretch reads VRPAEVLGKQKQEKERSAKKKDAA. A disordered region spans residues 81–110; the sequence is VRPAEVLGKQKQEKERSAKKKDAAASETSE.

Belongs to the bacterial ribosomal protein bS16 family.

In Prochlorococcus marinus (strain NATL2A), this protein is Small ribosomal subunit protein bS16.